The chain runs to 123 residues: Large ribosomal subunit protein uL24 (123 aa).

The protein belongs to the universal ribosomal protein uL24 family. Part of the 50S ribosomal subunit.

Its function is as follows. One of two assembly initiator proteins, it binds directly to the 5'-end of the 23S rRNA, where it nucleates assembly of the 50S subunit. In terms of biological role, located at the polypeptide exit tunnel on the outside of the subunit. This Pyrobaculum aerophilum (strain ATCC 51768 / DSM 7523 / JCM 9630 / CIP 104966 / NBRC 100827 / IM2) protein is Large ribosomal subunit protein uL24.